Here is a 588-residue protein sequence, read N- to C-terminus: MSKRTTYCGLVTESLLDQEVTLKGWVHNRRDLGGLIFVDLRDREGYVQIVFNPDFSEEALKTAETVRSEYVVEVKGLVKKRDPQTVNPKIATGQVEVQVSEINIINKSETPPFAINEENQNVDENIRLKYRYLDLRRQELAQTFKMRHQTTRSIRQYLDKEGFFDIETPVLTKSTPEGARDYLVPSRVHDGEFYALPQSPQIFKQLLMISGFDKYYQIVKCFRDEDLRADRQPEFTQVDIEMSFVDQEDVMDMGEEMLQNVVKDVKDVEIPRPFPRMTYNEAMERYGSDKPDTRFEMELINVSELGEEMDFKVFKDAVNNDGQVKAIVAKGAADQYTRKDIDALTEFVNIYGAKGLAWVKVVDDGLSGPIARFFETTHIEKLQSLTNAESGDLVLFVADKPNVVAQSLGALRLKLARELDLIDESKLNFLWVTDWPLLEYDEDLKRYTAAHHPFTAPKQEDIEKLDSEPENAQANAYDVVLNGYELGGGSIRIHNGELQAKMFEVLGFTEEQAQEQFGFLLDAFKYGAPPHGGIALGLDRLVMLLTGRTNLRDTIAFPKTASATCLLTDAPSEVSENQLEELSLRIRH.

Glu177 provides a ligand contact to L-aspartate. Residues 201 to 204 (QIFK) form an aspartate region. Arg223 contributes to the L-aspartate binding site. Residues 223 to 225 (RDE) and Gln232 each bind ATP. Position 451 (His451) interacts with L-aspartate. Glu485 is an ATP binding site. Arg492 contacts L-aspartate. 537-540 (GLDR) provides a ligand contact to ATP.

The protein belongs to the class-II aminoacyl-tRNA synthetase family. Type 1 subfamily. In terms of assembly, homodimer.

It localises to the cytoplasm. The catalysed reaction is tRNA(Asp) + L-aspartate + ATP = L-aspartyl-tRNA(Asp) + AMP + diphosphate. Its function is as follows. Catalyzes the attachment of L-aspartate to tRNA(Asp) in a two-step reaction: L-aspartate is first activated by ATP to form Asp-AMP and then transferred to the acceptor end of tRNA(Asp). The polypeptide is Aspartate--tRNA ligase (Staphylococcus saprophyticus subsp. saprophyticus (strain ATCC 15305 / DSM 20229 / NCIMB 8711 / NCTC 7292 / S-41)).